A 644-amino-acid polypeptide reads, in one-letter code: Macrolide export ATP-binding/permease protein MacB (644 aa).

An ABC transporter domain is found at 4–242 (IECKNINRYF…SNVGRIREKA (239 aa)). 40–47 (GQSGSGKS) provides a ligand contact to ATP. Helical transmembrane passes span 270-290 (LLTMLGIIIGIASVVSVVALG), 524-544 (IALISLVVGGIGVMNIMLVSV), 574-594 (LICVIGGLVGVGLSAAVSLVF), and 607-627 (AMSVIGAVACSTGIGIAFGFM).

The protein belongs to the ABC transporter superfamily. Macrolide exporter (TC 3.A.1.122) family. As to quaternary structure, homodimer.

The protein resides in the cell inner membrane. Functionally, non-canonical ABC transporter that contains transmembrane domains (TMD), which form a pore in the inner membrane, and an ATP-binding domain (NBD), which is responsible for energy generation. Confers resistance against macrolides. In Neisseria meningitidis serogroup B (strain ATCC BAA-335 / MC58), this protein is Macrolide export ATP-binding/permease protein MacB.